The sequence spans 182 residues: MKLSEVQDNMQKTIESTQRSFNTIRTGRANSALLDRVMVDYYGTETPLKSLANITTPDATTIAIQPYDRGSMGQIEKAIQLSDIGLTPNNDGQMIRLNIPPLTTERRKELVKLAGKLAEEGKVAIRNIRRDAIDSVRKQEKNHELSEDESRNLQDEIQKVTDEYTAKIDELLAAKEKDISTV.

Belongs to the RRF family.

It is found in the cytoplasm. In terms of biological role, responsible for the release of ribosomes from messenger RNA at the termination of protein biosynthesis. May increase the efficiency of translation by recycling ribosomes from one round of translation to another. This is Ribosome-recycling factor from Gloeothece citriformis (strain PCC 7424) (Cyanothece sp. (strain PCC 7424)).